Consider the following 182-residue polypeptide: NADH-quinone oxidoreductase subunit I (182 aa).

2 consecutive 4Fe-4S ferredoxin-type domains span residues 52–82 (LTRDPDGEERCVACNLCAVACPVGCISLQKA) and 92–121 (EFFRINFSRCIFCGLCEEACPTTAIQLTPD). The [4Fe-4S] cluster site is built by Cys62, Cys65, Cys68, Cys72, Cys101, Cys104, Cys107, and Cys111.

Belongs to the complex I 23 kDa subunit family. NDH-1 is composed of 13 different subunits. Subunits NuoA, H, J, K, L, M, N constitute the membrane sector of the complex. It depends on [4Fe-4S] cluster as a cofactor.

It is found in the cell inner membrane. It catalyses the reaction a quinone + NADH + 5 H(+)(in) = a quinol + NAD(+) + 4 H(+)(out). Functionally, NDH-1 shuttles electrons from NADH, via FMN and iron-sulfur (Fe-S) centers, to quinones in the respiratory chain. The immediate electron acceptor for the enzyme in this species is believed to be ubiquinone. Couples the redox reaction to proton translocation (for every two electrons transferred, four hydrogen ions are translocated across the cytoplasmic membrane), and thus conserves the redox energy in a proton gradient. The protein is NADH-quinone oxidoreductase subunit I of Pseudomonas aeruginosa (strain LESB58).